A 972-amino-acid chain; its full sequence is Isoleucine--tRNA ligase (972 aa).

The 'HIGH' region signature appears at 63–73; it reads PYANGNIHIGH. Glu603 serves as a coordination point for L-isoleucyl-5'-AMP. The short motif at 644–648 is the 'KMSKS' region element; that stretch reads KMSKS. Position 647 (Lys647) interacts with ATP.

Belongs to the class-I aminoacyl-tRNA synthetase family. IleS type 1 subfamily. In terms of assembly, monomer.

It localises to the cytoplasm. The enzyme catalyses tRNA(Ile) + L-isoleucine + ATP = L-isoleucyl-tRNA(Ile) + AMP + diphosphate. Functionally, catalyzes the attachment of isoleucine to tRNA(Ile). As IleRS can inadvertently accommodate and process structurally similar amino acids such as valine, to avoid such errors it has two additional distinct tRNA(Ile)-dependent editing activities. One activity is designated as 'pretransfer' editing and involves the hydrolysis of activated Val-AMP. The other activity is designated 'posttransfer' editing and involves deacylation of mischarged Val-tRNA(Ile). The chain is Isoleucine--tRNA ligase from Brucella abortus (strain 2308).